The sequence spans 522 residues: MTPNIHHDKILILDFGAQYTQLIARRIREIGVYCEVWPWDHSPEEILSFGAKGIILSGGPESTTSPGAPAAPQHVFDSDLPIFGICYGMQTMAVHLGGATEAADKREFGHASVQVIYPDTLFSGLSDHPSEFRLDVWMSHGDHVSRVPPGFTITAATDRIPIAAMSREDKRWYGVQFHPEVTHTLQGQALLRRFVVDICGCQTLWTAANIIEDQIARVRERVGRDEVILGLSGGVDSSVVAALLHKAIGSQLTCVFVDTGLLRWGEGDQVMAMFEEHMGVNVVRINAASRYFDALQGVYDPEAKRKIIGNLFIQIFEEEASKRKQAKWLAQGTIYPDVIESAGSKTGKAHVIKSHHNVGGLPEQMTLGMVEPLRELFKDEVRRLGVALGLPHAMVYRHPFPGPGLGVRILGEVKPEYAELLAKADSIFIDELHQADLYDKVSQAFAVFLPVKSVGVVGDARAYEWVIALRAVETVDFMTAHWAPLPYDFLSTVSNRIINELRGVSRVVYDISGKPPATIEWE.

The 196-residue stretch at 9–204 (KILILDFGAQ…VVDICGCQTL (196 aa)) folds into the Glutamine amidotransferase type-1 domain. C86 functions as the Nucleophile in the catalytic mechanism. Catalysis depends on residues H178 and E180. A GMPS ATP-PPase domain is found at 205-397 (WTAANIIEDQ…LGLPHAMVYR (193 aa)). 232 to 238 (SGGVDSS) contributes to the ATP binding site.

As to quaternary structure, homodimer.

The catalysed reaction is XMP + L-glutamine + ATP + H2O = GMP + L-glutamate + AMP + diphosphate + 2 H(+). It functions in the pathway purine metabolism; GMP biosynthesis; GMP from XMP (L-Gln route): step 1/1. Catalyzes the synthesis of GMP from XMP. This is GMP synthase [glutamine-hydrolyzing] from Xylella fastidiosa (strain M12).